A 258-amino-acid chain; its full sequence is 5'-nucleotidase SurE (258 aa).

Positions 10, 11, 41, and 96 each coordinate a divalent metal cation.

It belongs to the SurE nucleotidase family. A divalent metal cation serves as cofactor.

It is found in the cytoplasm. It carries out the reaction a ribonucleoside 5'-phosphate + H2O = a ribonucleoside + phosphate. Functionally, nucleotidase that shows phosphatase activity on nucleoside 5'-monophosphates. The polypeptide is 5'-nucleotidase SurE (Sorangium cellulosum (strain So ce56) (Polyangium cellulosum (strain So ce56))).